Consider the following 292-residue polypeptide: RNA 5'-monophosphate methyltransferase (292 aa).

A disordered region spans residues 1-21; that stretch reads MAVPTELDGGSVKETAAEEES. S-adenosyl-L-methionine-binding positions include Arg46, Asn76, Asp110, 135 to 136, and Met164; that span reads DF. The region spanning 53–274 is the Bin3-type SAM domain; the sequence is ELLRQLFPES…KQTIETHPIP (222 aa).

It belongs to the methyltransferase superfamily. In terms of assembly, interacts with DICER1; the interaction may be mediated by RNA.

It localises to the cytoplasm. It carries out the reaction a 5'-end 5'-phospho-ribonucleoside-RNA + S-adenosyl-L-methionine = a 5'-end (5'-methylphospho)-ribonucleoside-RNA + S-adenosyl-L-homocysteine. The enzyme catalyses a 5'-end 5'-phospho-ribonucleoside-RNA + 2 S-adenosyl-L-methionine = a 5'-end (5'-bismethylphospho)-ribonucleoside-RNA + 2 S-adenosyl-L-homocysteine. O-methyltransferase that specifically monomethylates 5'-monophosphate of cytoplasmic histidyl tRNA (tRNA(His)), acting as a capping enzyme by protecting tRNA(His) from cleavage by DICER1. Also able, with less efficiently, to methylate the 5' monophosphate of a subset of pre-miRNAs, acting as a negative regulator of miRNA processing. The 5' monophosphate of pre-miRNAs is recognized by DICER1 and is required for pre-miRNAs processing: methylation at this position reduces the processing of pre-miRNAs by DICER1. Was also reported to mediate dimethylation of pre-miR-145; however dimethylation cannot be reproduced by another group which observes a monomethylation of pre-miR-145. The chain is RNA 5'-monophosphate methyltransferase from Homo sapiens (Human).